The sequence spans 325 residues: Ribonuclease Z (325 aa).

Residues histidine 63, histidine 65, aspartate 67, histidine 68, histidine 147, aspartate 218, and histidine 276 each coordinate Zn(2+). The Proton acceptor role is filled by aspartate 67.

It belongs to the RNase Z family. In terms of assembly, homodimer. It depends on Zn(2+) as a cofactor.

The enzyme catalyses Endonucleolytic cleavage of RNA, removing extra 3' nucleotides from tRNA precursor, generating 3' termini of tRNAs. A 3'-hydroxy group is left at the tRNA terminus and a 5'-phosphoryl group is left at the trailer molecule.. Functionally, zinc phosphodiesterase, which displays some tRNA 3'-processing endonuclease activity. Probably involved in tRNA maturation, by removing a 3'-trailer from precursor tRNA. The polypeptide is Ribonuclease Z (Oenococcus oeni (strain ATCC BAA-331 / PSU-1)).